We begin with the raw amino-acid sequence, 325 residues long: Neisseria adhesin A (325 aa).

The first 23 residues, methionine 1 to alanine 23, serve as a signal peptide directing secretion. The head domain stretch occupies residues aspartate 24 to alanine 137. Residues leucine 86–asparagine 135 adopt a coiled-coil conformation. The coiled stalk domain stretch occupies residues isoleucine 139–glutamate 231. Positions histidine 232–glycine 270 are outer membrane translocation of the passenger domain. The next 4 membrane-spanning stretches (beta stranded) occupy residues glycine 270–glycine 280, glutamate 284–phenylalanine 295, lysine 302–glycine 308, and serine 314–tryptophan 325. A translocator domain region spans residues arginine 271 to tryptophan 325.

The protein belongs to the autotransporter-2 (AT-2) (TC 1.B.40) family. As to quaternary structure, homotrimer.

Its subcellular location is the cell surface. It localises to the cell outer membrane. In terms of biological role, an antigenic bacterial cell surface protein that adheres to and induces bacterial uptake by human epithelial cells. The chain is Neisseria adhesin A from Neisseria meningitidis serogroup B.